The chain runs to 299 residues: 4-diphosphocytidyl-2-C-methyl-D-erythritol kinase (299 aa).

Residue lysine 19 is part of the active site. Residue proline 110–alanine 120 participates in ATP binding. The active site involves aspartate 152.

The protein belongs to the GHMP kinase family. IspE subfamily.

The catalysed reaction is 4-CDP-2-C-methyl-D-erythritol + ATP = 4-CDP-2-C-methyl-D-erythritol 2-phosphate + ADP + H(+). It functions in the pathway isoprenoid biosynthesis; isopentenyl diphosphate biosynthesis via DXP pathway; isopentenyl diphosphate from 1-deoxy-D-xylulose 5-phosphate: step 3/6. In terms of biological role, catalyzes the phosphorylation of the position 2 hydroxy group of 4-diphosphocytidyl-2C-methyl-D-erythritol. This is 4-diphosphocytidyl-2-C-methyl-D-erythritol kinase from Agrobacterium fabrum (strain C58 / ATCC 33970) (Agrobacterium tumefaciens (strain C58)).